The sequence spans 229 residues: UPF0319 protein Sbal223_2728 (229 aa).

Residues 1-21 form the signal peptide; that stretch reads MKSLLPISSLLVLLGSASAFA.

It belongs to the UPF0319 family.

The protein is UPF0319 protein Sbal223_2728 of Shewanella baltica (strain OS223).